The primary structure comprises 245 residues: MKHVGPVEPAAGGPEVPPVAALGAAPESAAALFGPRLATAQRYAEVLGTAGVERGLLGPREVDRIWDRHILNSAAVAGLLGRGDRIIDIGSGAGLPGIPLAIARPDLEVVLLEPLLRRSEFLTEVVDELGLAVEVVRGRAEERPVRNRFGDRDAAVSRAVAALDKLTKWSMPLLRHDGRMLAIKGERAAEEVDRYRRVMTASGAADVRVVTCGANYLRPPATVVSARRAKPPHPKSARTGKAGTR.

S-adenosyl-L-methionine contacts are provided by residues Gly-90, Leu-95, 140–141, and Arg-158; that span reads AE. The tract at residues 223–245 is disordered; the sequence is VVSARRAKPPHPKSARTGKAGTR. Over residues 227 to 245 the composition is skewed to basic residues; the sequence is RRAKPPHPKSARTGKAGTR.

This sequence belongs to the methyltransferase superfamily. RNA methyltransferase RsmG family.

It localises to the cytoplasm. Specifically methylates the N7 position of guanine in position 518 of 16S rRNA. This is Ribosomal RNA small subunit methyltransferase G from Mycobacterium avium (strain 104).